The sequence spans 423 residues: G-protein coupled receptor 83 (423 aa).

The first 16 residues, 1–16 (MVPHLLLLCLLPLVRA), serve as a signal peptide directing secretion. Residues 18–71 (EPHEGRADEQSAEAALAVPNASHFFSWNNYTFSDWQNFVGRRRYGAESQNPTVK) lie on the Extracellular side of the membrane. Asn37 and Asn46 each carry an N-linked (GlcNAc...) asparagine glycan. The helical transmembrane segment at 72 to 92 (ALLIVAYSFIIVFSLFGNVLV) threads the bilayer. Topologically, residues 93–107 (CHVIFKNQRMHSATS) are cytoplasmic. The helical transmembrane segment at 108–129 (LFIVNLAVADIMITLLNTPFTL) threads the bilayer. The Extracellular portion of the chain corresponds to 130–145 (VRFVNSTWIFGKGMCH). An N-linked (GlcNAc...) asparagine glycan is attached at Asn134. A disulfide bridge connects residues Cys144 and Cys224. A helical transmembrane segment spans residues 146-167 (VSRFAQYCSLHVSALTLTAIAV). At 168 to 186 (DRHQVIMHPLKPRISITKG) the chain is on the cytoplasmic side. Residues 187 to 208 (VIYIAVIWTMATFFSLPHAICQ) traverse the membrane as a helical segment. Over 209-238 (KLFTFKYSEDIVRSLCLPDFPEPADLFWKY) the chain is Extracellular. The helical transmembrane segment at 239–260 (LDLATFILLYILPLLIISVAYA) threads the bilayer. At 261 to 293 (RVAKKLWLCNMIGDVTTEQYFALRRKKKKTIKM) the chain is on the cytoplasmic side. The helical transmembrane segment at 294 to 315 (LMLVVVLFALCWFPLNCYVLLL) threads the bilayer. Residues 316-327 (SSKVIRTNNALY) are Extracellular-facing. A helical membrane pass occupies residues 328–348 (FAFHWFAMSSTCYNPFIYCWL). The Cytoplasmic segment spans residues 349 to 423 (NENFRIELKA…SSVEPIVTMS (75 aa)). Residues 402 to 414 (PTSQLQSGKTDLS) are compositionally biased toward polar residues. The segment at 402–423 (PTSQLQSGKTDLSSVEPIVTMS) is disordered.

This sequence belongs to the G-protein coupled receptor 1 family. Highly expressed in the brain and spinal cord, and found in lower concentrations in the thymus and other tissues.

Its subcellular location is the cell membrane. Its function is as follows. G-protein coupled receptor for PEN, a neuropeptide produced from the precursor protein, proSAAS (encoded by PCSK1N). Acts through a G(i)- and G(q)-alpha-alpha-mediated pathway in response to PEN. Plays a role in food intake and body weight regulation. May contribute to the regulation of anxiety-related behaviors. This chain is G-protein coupled receptor 83, found in Homo sapiens (Human).